We begin with the raw amino-acid sequence, 275 residues long: NH(3)-dependent NAD(+) synthetase (275 aa).

50 to 57 is a binding site for ATP; the sequence is GISGGVDS. D56 is a binding site for Mg(2+). Position 147 (R147) interacts with deamido-NAD(+). An ATP-binding site is contributed by T167. E172 lines the Mg(2+) pocket. Deamido-NAD(+) contacts are provided by K180 and D187. Residues K196 and T218 each contribute to the ATP site. 267–268 provides a ligand contact to deamido-NAD(+); that stretch reads HK.

The protein belongs to the NAD synthetase family. Homodimer.

The enzyme catalyses deamido-NAD(+) + NH4(+) + ATP = AMP + diphosphate + NAD(+) + H(+). Its pathway is cofactor biosynthesis; NAD(+) biosynthesis; NAD(+) from deamido-NAD(+) (ammonia route): step 1/1. In terms of biological role, catalyzes the ATP-dependent amidation of deamido-NAD to form NAD. Uses ammonia as a nitrogen source. The protein is NH(3)-dependent NAD(+) synthetase of Pseudomonas entomophila (strain L48).